Reading from the N-terminus, the 642-residue chain is Threonine--tRNA ligase (642 aa).

The region spanning 1–61 is the TGS domain; sequence MPVITLPDGS…ENDATLSIIT (61 aa). The segment at 243–534 is catalytic; the sequence is DHRKIGKQLD…LTEEFAGFFP (292 aa). Positions 334, 385, and 511 each coordinate Zn(2+).

This sequence belongs to the class-II aminoacyl-tRNA synthetase family. In terms of assembly, homodimer. Zn(2+) is required as a cofactor.

It is found in the cytoplasm. It catalyses the reaction tRNA(Thr) + L-threonine + ATP = L-threonyl-tRNA(Thr) + AMP + diphosphate + H(+). In terms of biological role, catalyzes the attachment of threonine to tRNA(Thr) in a two-step reaction: L-threonine is first activated by ATP to form Thr-AMP and then transferred to the acceptor end of tRNA(Thr). Also edits incorrectly charged L-seryl-tRNA(Thr). This is Threonine--tRNA ligase from Salmonella paratyphi A (strain ATCC 9150 / SARB42).